A 427-amino-acid polypeptide reads, in one-letter code: Actin-related protein 3 (427 aa).

Belongs to the actin family. ARP3 subfamily. Component of the Arp2/3 complex composed of arp2, act2, arc1/p41-ARC, arc2/p34-ARC, arc3/p21-ARC, arc4/p20-ARC and arc5/p16-ARC.

It is found in the cytoplasm. It localises to the cytoskeleton. Its subcellular location is the actin patch. Its function is as follows. Functions as ATP-binding component of the Arp2/3 complex which is involved in regulation of actin polymerization and together with an activating nucleation-promoting factor (NPF) mediates the formation of branched actin networks. Seems to contact the pointed end of the daughter actin filament. May be involved in cytokinesis. The protein is Actin-related protein 3 (act2) of Schizosaccharomyces pombe (strain 972 / ATCC 24843) (Fission yeast).